Reading from the N-terminus, the 313-residue chain is Secretory carrier-associated membrane protein 4 (313 aa).

A disordered region spans residues 1 to 69; it reads MAGRSRYDNP…LPPEPADFYN (69 aa). Topologically, residues 1-148 are cytoplasmic; the sequence is MAGRSRYDNP…EIPVHLQRTQ (148 aa). A coiled-coil region spans residues 85–116; it reads MKTREKELLAKEAELNRREKEIKRREEAAARA. 4 consecutive transmembrane segments (helical) span residues 149 to 169, 181 to 201, 216 to 236, and 255 to 275; these read YVAF…IICV, IWFL…YLWY, FGWF…AAVS, and LIGN…MFCL. Topologically, residues 276-313 are cytoplasmic; the sequence is ESLLSMWVIQRVYLYFRGSGKEAEMKREAARSAARAAF.

It belongs to the SCAMP family.

The protein localises to the cell membrane. It is found in the cytoplasmic vesicle. It localises to the secretory vesicle membrane. In terms of biological role, probably involved in membrane trafficking. The sequence is that of Secretory carrier-associated membrane protein 4 (SCAMP4) from Oryza sativa subsp. japonica (Rice).